The following is a 529-amino-acid chain: Keratin, type II cytoskeletal 74 (529 aa).

Residues 1–139 (MSRQLNIKSS…DPEIQKVRAQ (139 aa)) are head. The segment at 140–175 (EREQIKVLNDKFASFIDKVRFLEQQNQVLETKWELL) is coil 1A. An IF rod domain is found at 140 to 453 (EREQIKVLND…KLLEGEECRM (314 aa)). Residues 176–194 (QQLDLNNCKKNLEPILEGY) are linker 1. Residues 195 to 286 (ISNLRKQLET…CLYDAEIAQI (92 aa)) are coil 1B. Positions 287–310 (QTHASETSVILSMDNNRDLDLDSI) are linker 12. A coil 2 region spans residues 311–449 (IAEVRMHYEE…ATYRKLLEGE (139 aa)). The tract at residues 450–529 (ECRMSGENPS…ASIPARKATR (80 aa)) is tail. Residues 484 to 500 (GASAVAGSSGSTQSGQT) show a composition bias toward low complexity. The segment at 484-529 (GASAVAGSSGSTQSGQTKTTEARGGDLKDTQGKSTPASIPARKATR) is disordered. Residues 503 to 514 (TEARGGDLKDTQ) show a composition bias toward basic and acidic residues. Thr513 bears the Phosphothreonine mark.

It belongs to the intermediate filament family. Heterotetramer of two type I and two type II keratins. Highly expressed in hair follicles from scalp. In hair, it is specifically present in the inner root sheath (IRS) of the hair follicle. Present in the IRS Huxley layer, but not in Henle layer or cuticle of the IRS. In the IRS Huxley layer, it is expressed in specialized Huxley cells, termed 'Fluegelzellen, along the area of differentiated Henle cells (at protein level).

Has a role in hair formation. Specific component of keratin intermediate filaments in the inner root sheath (IRS) of the hair follicle. The chain is Keratin, type II cytoskeletal 74 (KRT74) from Homo sapiens (Human).